The primary structure comprises 847 residues: Cancer-associated gene 1 protein homolog (847 aa).

The disordered stretch occupies residues 118-161 (EEKPELQSQVYNDPADASQKPDPLKEESLMESSTSENKDELVHE). A coiled-coil region spans residues 377 to 567 (NVILEKNDIN…AAKREAQACT (191 aa)).

This Rattus norvegicus (Rat) protein is Cancer-associated gene 1 protein homolog (Cage1).